The sequence spans 539 residues: Chaperonin GroEL 1 (539 aa).

Residues 30–33, lysine 51, 87–91, glycine 415, 480–482, and aspartate 496 each bind ATP; these read TLGP, DGTTT, and NAA.

It belongs to the chaperonin (HSP60) family. As to quaternary structure, forms a cylinder of 14 subunits composed of two heptameric rings stacked back-to-back. Interacts with the co-chaperonin GroES.

It localises to the cytoplasm. It catalyses the reaction ATP + H2O + a folded polypeptide = ADP + phosphate + an unfolded polypeptide.. Its function is as follows. Together with its co-chaperonin GroES, plays an essential role in assisting protein folding. The GroEL-GroES system forms a nano-cage that allows encapsulation of the non-native substrate proteins and provides a physical environment optimized to promote and accelerate protein folding. The protein is Chaperonin GroEL 1 of Bradyrhizobium sp. (strain ORS 278).